A 419-amino-acid polypeptide reads, in one-letter code: UDP-N-acetylglucosamine 1-carboxyvinyltransferase (419 aa).

22–23 contributes to the phosphoenolpyruvate binding site; the sequence is KN. Arg-93 contacts UDP-N-acetyl-alpha-D-glucosamine. Cys-117 serves as the catalytic Proton donor. Cys-117 carries the 2-(S-cysteinyl)pyruvic acid O-phosphothioketal modification. Residues Asp-306 and Ile-328 each coordinate UDP-N-acetyl-alpha-D-glucosamine.

Belongs to the EPSP synthase family. MurA subfamily.

Its subcellular location is the cytoplasm. The catalysed reaction is phosphoenolpyruvate + UDP-N-acetyl-alpha-D-glucosamine = UDP-N-acetyl-3-O-(1-carboxyvinyl)-alpha-D-glucosamine + phosphate. The protein operates within cell wall biogenesis; peptidoglycan biosynthesis. Its function is as follows. Cell wall formation. Adds enolpyruvyl to UDP-N-acetylglucosamine. This chain is UDP-N-acetylglucosamine 1-carboxyvinyltransferase, found in Idiomarina loihiensis (strain ATCC BAA-735 / DSM 15497 / L2-TR).